The following is a 378-amino-acid chain: Signal recognition particle receptor FtsY (378 aa).

GTP contacts are provided by residues 184–191 (GVNGTGKT), 266–270 (DTAGR), and 330–333 (TKLD).

It belongs to the GTP-binding SRP family. FtsY subfamily. In terms of assembly, part of the signal recognition particle protein translocation system, which is composed of SRP and FtsY. SRP is a ribonucleoprotein composed of Ffh and a 4.5S RNA molecule.

The protein resides in the cell membrane. It localises to the cytoplasm. The catalysed reaction is GTP + H2O = GDP + phosphate + H(+). Involved in targeting and insertion of nascent membrane proteins into the cytoplasmic membrane. Acts as a receptor for the complex formed by the signal recognition particle (SRP) and the ribosome-nascent chain (RNC). Interaction with SRP-RNC leads to the transfer of the RNC complex to the Sec translocase for insertion into the membrane, the hydrolysis of GTP by both Ffh and FtsY, and the dissociation of the SRP-FtsY complex into the individual components. In Buchnera aphidicola subsp. Acyrthosiphon pisum (strain APS) (Acyrthosiphon pisum symbiotic bacterium), this protein is Signal recognition particle receptor FtsY.